We begin with the raw amino-acid sequence, 107 residues long: Large ribosomal subunit protein P1 (107 aa).

Residues 67–107 form a disordered region; the sequence is GAAPAAAAPAAGGAPAAGAAPKKEEKKEPSEEEDMGFSLFD. Residues 69–86 show a composition bias toward low complexity; sequence APAAAAPAAGGAPAAGAA.

Belongs to the eukaryotic ribosomal protein P1/P2 family. In terms of assembly, P1 and P2 exist as dimers at the large ribosomal subunit.

In terms of biological role, plays an important role in the elongation step of protein synthesis. This is Large ribosomal subunit protein P1 from Chlamydomonas reinhardtii (Chlamydomonas smithii).